A 354-amino-acid polypeptide reads, in one-letter code: UPF0283 membrane protein CGSHiGG_02710 (354 aa).

3 helical membrane-spanning segments follow: residues 57-77, 87-107, and 211-231; these read LLKFTALLFGLATVAQSVQWI, IYLAFALVSLIIILLGIKEII, and ESAVIVAISPLAVVDMFFIAW.

It belongs to the UPF0283 family.

The protein localises to the cell inner membrane. The polypeptide is UPF0283 membrane protein CGSHiGG_02710 (Haemophilus influenzae (strain PittGG)).